Reading from the N-terminus, the 512-residue chain is 2,3-bisphosphoglycerate-independent phosphoglycerate mutase (512 aa).

Asp14 and Ser64 together coordinate Mn(2+). Residue Ser64 is the Phosphoserine intermediate of the active site. Residues His125, Arg155–Asp156, Arg187, Arg193, Arg259–Arg262, and Lys332 contribute to the substrate site. Mn(2+) is bound by residues Asp399, His403, Asp440, His441, and His459.

The protein belongs to the BPG-independent phosphoglycerate mutase family. As to quaternary structure, monomer. It depends on Mn(2+) as a cofactor.

The enzyme catalyses (2R)-2-phosphoglycerate = (2R)-3-phosphoglycerate. It functions in the pathway carbohydrate degradation; glycolysis; pyruvate from D-glyceraldehyde 3-phosphate: step 3/5. Functionally, catalyzes the interconversion of 2-phosphoglycerate and 3-phosphoglycerate. The sequence is that of 2,3-bisphosphoglycerate-independent phosphoglycerate mutase from Ruthia magnifica subsp. Calyptogena magnifica.